A 196-amino-acid polypeptide reads, in one-letter code: Large ribosomal subunit protein uL18 (196 aa).

This sequence belongs to the universal ribosomal protein uL18 family. In terms of assembly, part of the 50S ribosomal subunit. Contacts the 5S and 23S rRNAs.

In terms of biological role, this is one of the proteins that bind and probably mediate the attachment of the 5S RNA into the large ribosomal subunit, where it forms part of the central protuberance. This chain is Large ribosomal subunit protein uL18, found in Thermofilum pendens (strain DSM 2475 / Hrk 5).